Consider the following 318-residue polypeptide: HPr kinase/phosphorylase (318 aa).

Catalysis depends on residues H143 and K164. G158–S165 is an ATP binding site. S165 contributes to the Mg(2+) binding site. D182 acts as the Proton acceptor; for phosphorylation activity. Proton donor; for dephosphorylation activity in catalysis. The interval M206–N215 is important for the catalytic mechanism of both phosphorylation and dephosphorylation. E207 is a Mg(2+) binding site. The active site involves R248. Positions P269–R274 are important for the catalytic mechanism of dephosphorylation.

Belongs to the HPrK/P family. Homohexamer. Mg(2+) serves as cofactor.

It catalyses the reaction [HPr protein]-L-serine + ATP = [HPr protein]-O-phospho-L-serine + ADP + H(+). The enzyme catalyses [HPr protein]-O-phospho-L-serine + phosphate + H(+) = [HPr protein]-L-serine + diphosphate. Functionally, catalyzes the ATP- as well as the pyrophosphate-dependent phosphorylation of a specific serine residue in HPr, a phosphocarrier protein of the phosphoenolpyruvate-dependent sugar phosphotransferase system (PTS). HprK/P also catalyzes the pyrophosphate-producing, inorganic phosphate-dependent dephosphorylation (phosphorolysis) of seryl-phosphorylated HPr (P-Ser-HPr). The protein is HPr kinase/phosphorylase of Leptospira borgpetersenii serovar Hardjo-bovis (strain L550).